The sequence spans 691 residues: DNA ligase (691 aa).

NAD(+) contacts are provided by residues 41-45, 90-91, and glutamate 130; these read DAEYD and SL. The active-site N6-AMP-lysine intermediate is lysine 132. The NAD(+) site is built by arginine 153, glutamate 190, lysine 307, and lysine 331. Zn(2+) is bound by residues cysteine 425, cysteine 428, cysteine 443, and cysteine 449. The 82-residue stretch at 610–691 folds into the BRCT domain; sequence APQGVLAGKT…MHTLLEGHAR (82 aa).

This sequence belongs to the NAD-dependent DNA ligase family. LigA subfamily. It depends on Mg(2+) as a cofactor. The cofactor is Mn(2+).

The catalysed reaction is NAD(+) + (deoxyribonucleotide)n-3'-hydroxyl + 5'-phospho-(deoxyribonucleotide)m = (deoxyribonucleotide)n+m + AMP + beta-nicotinamide D-nucleotide.. DNA ligase that catalyzes the formation of phosphodiester linkages between 5'-phosphoryl and 3'-hydroxyl groups in double-stranded DNA using NAD as a coenzyme and as the energy source for the reaction. It is essential for DNA replication and repair of damaged DNA. This Burkholderia pseudomallei (strain 1710b) protein is DNA ligase.